The following is a 276-amino-acid chain: 2-dehydro-3-deoxyphosphooctonate aldolase (276 aa).

This sequence belongs to the KdsA family.

It is found in the cytoplasm. It catalyses the reaction D-arabinose 5-phosphate + phosphoenolpyruvate + H2O = 3-deoxy-alpha-D-manno-2-octulosonate-8-phosphate + phosphate. It participates in carbohydrate biosynthesis; 3-deoxy-D-manno-octulosonate biosynthesis; 3-deoxy-D-manno-octulosonate from D-ribulose 5-phosphate: step 2/3. Its pathway is bacterial outer membrane biogenesis; lipopolysaccharide biosynthesis. The sequence is that of 2-dehydro-3-deoxyphosphooctonate aldolase from Xanthomonas oryzae pv. oryzae (strain MAFF 311018).